Here is a 282-residue protein sequence, read N- to C-terminus: Non-selective voltage-gated ion channel VDAC2 (282 aa).

An N-acetylalanine modification is found at Ala1. 19 beta stranded membrane-spanning segments follow: residues 25 to 34 (LVKLDVKTKS), 38 to 46 (VEFTTSGTS), 53 to 63 (VNGSLETKYKW), 68 to 75 (LTFTEKWN), 79 to 88 (TLGTEIAIED), 94 to 103 (LKLTFDTTFS), 110 to 119 (SGKVKAAYKQ), 122 to 129 (VNLGCDVD), 136 to 144 (AIHGSAVVG), 149 to 157 (LAGYQMTFD), 162 to 174 (KLTK…GYKT), 177 to 184 (FQLHTNVN), 188 to 197 (EFAGSIYQKV), 201 to 210 (METAVNLAWT), 217 to 226 (RFGIAAKYQL), 230 to 237 (AAISAKVN), 241 to 250 (LVGVGYTQTL), 253 to 262 (GVKLTLSALV), and 272 to 281 (HKLGLGLELE). NAD(+) is bound by residues 241-243 (LVG) and 259-263 (SALVD).

It belongs to the eukaryotic mitochondrial porin family. In terms of assembly, monomer, homodimer and higher order oligomers; formation of higher order structures is necessary for scramblase activity. As to expression, expressed in skeletal muscle and oocytes.

Its subcellular location is the mitochondrion outer membrane. It localises to the membrane. It catalyses the reaction chloride(in) = chloride(out). The catalysed reaction is K(+)(in) = K(+)(out). The enzyme catalyses a 1,2-diacyl-sn-glycero-3-phospho-L-serine(in) = a 1,2-diacyl-sn-glycero-3-phospho-L-serine(out). It carries out the reaction a 1,2-diacyl-sn-glycero-3-phosphocholine(in) = a 1,2-diacyl-sn-glycero-3-phosphocholine(out). It catalyses the reaction a 1,2-diacyl-sn-glycero-3-phospho-(1D-myo-inositol)(in) = a 1,2-diacyl-sn-glycero-3-phospho-(1D-myo-inositol)(out). Non-selective voltage-gated ion channel that mediates the transport of anions and cations through the mitochondrion outer membrane and plasma membrane. The channel adopts an open conformation at zero mV and a closed conformation at both positive and negative potentials. There are two populations of channels; the main that functions in a lower open-state conductance with lower ion selectivity, that switch, in a voltage-dependent manner, from the open to a low-conducting 'closed' state and the other that has a normal ion selectivity in the typical high conductance, 'open' state. In terms of biological role, catalyzes the scrambling of phospholipids across the outer mitochondrial membrane; the mechanism is unrelated to channel activity and is capable of translocating both anionic and zwitterionic phospholipids. This Xenopus laevis (African clawed frog) protein is Non-selective voltage-gated ion channel VDAC2.